The sequence spans 44 residues: Photosystem II reaction center protein K (44 aa).

The propeptide occupies 1-7; it reads MTTLLLA. A helical transmembrane segment spans residues 19-39; that stretch reads IVDVLPVIPLLFLLLAFVWQA.

This sequence belongs to the PsbK family. As to quaternary structure, PSII is composed of 1 copy each of membrane proteins PsbA, PsbB, PsbC, PsbD, PsbE, PsbF, PsbH, PsbI, PsbJ, PsbK, PsbL, PsbM, PsbT, PsbX, PsbY, PsbZ, Psb30/Ycf12, at least 3 peripheral proteins of the oxygen-evolving complex and a large number of cofactors. It forms dimeric complexes.

The protein localises to the plastid. Its subcellular location is the chloroplast thylakoid membrane. One of the components of the core complex of photosystem II (PSII). PSII is a light-driven water:plastoquinone oxidoreductase that uses light energy to abstract electrons from H(2)O, generating O(2) and a proton gradient subsequently used for ATP formation. It consists of a core antenna complex that captures photons, and an electron transfer chain that converts photonic excitation into a charge separation. The polypeptide is Photosystem II reaction center protein K (Tupiella akineta (Green alga)).